The chain runs to 337 residues: Phosphate acyltransferase (337 aa).

This sequence belongs to the PlsX family. Homodimer. Probably interacts with PlsY.

The protein resides in the cytoplasm. It carries out the reaction a fatty acyl-[ACP] + phosphate = an acyl phosphate + holo-[ACP]. Its pathway is lipid metabolism; phospholipid metabolism. In terms of biological role, catalyzes the reversible formation of acyl-phosphate (acyl-PO(4)) from acyl-[acyl-carrier-protein] (acyl-ACP). This enzyme utilizes acyl-ACP as fatty acyl donor, but not acyl-CoA. In Listeria welshimeri serovar 6b (strain ATCC 35897 / DSM 20650 / CCUG 15529 / CIP 8149 / NCTC 11857 / SLCC 5334 / V8), this protein is Phosphate acyltransferase.